A 58-amino-acid polypeptide reads, in one-letter code: DNA-directed RNA polymerases I, II, and III subunit RPABC4 (58 aa).

4 residues coordinate Zn(2+): cysteine 19, cysteine 22, cysteine 36, and cysteine 39. The segment at 19–39 (CGECHTENEIKSRDPIRCREC) adopts a C4-type zinc-finger fold.

It belongs to the archaeal Rpo12/eukaryotic RPC10 RNA polymerase subunit family. As to quaternary structure, component of the RNA polymerase I (Pol I), RNA polymerase II (Pol II) and RNA polymerase III (Pol III) complexes consisting of at least 13, 12 and 17 subunits, respectively. Pol I complex consists of a ten-subunit catalytic core composed of POLR1A/RPA1, POLR1B/RPA2, POLR1C/RPAC1, POLR1D/RPAC2, POLR1H/RPA12, POLR2E/RPABC1, POLR2F/RPABC2, POLR2H/RPABC3, POLR2K/RPABC4 and POLR2L/RPABC5; a mobile stalk subunit POLR1F/RPA43 protruding from the core and additional subunits homologous to general transcription factors POLR1E/RPA49 and POLR1G/RPA34. Part of Pol I pre-initiation complex (PIC), in which Pol I core assembles with RRN3 and promoter-bound UTBF and SL1/TIF-IB complex. Pol II complex contains a ten-subunit catalytic core composed of POLR2A/RPB1, POLR2B/RPB2, POLR2C/RPB3, POLR2I/RPB9, POLR2J/RPB11, POLR2E/RPABC1, POLR2F/RPABC2, POLR2H/RPABC3, POLR2K/RPABC4 and POLR2L/RPABC5 and a mobile stalk composed of two subunits POLR2D/RPB4 and POLR2G/RPB7. Part of Pol II(G) complex, in which Pol II core associates with an additional subunit POLR2M; unlike conventional Pol II, Pol II(G) functions as a transcriptional repressor. Part of TBP-based Pol II pre-initiation complex (PIC), in which Pol II core assembles with general transcription factors and other specific initiation factors including GTF2E1, GTF2E2, GTF2F1, GTF2F2, TCEA1, ERCC2, ERCC3, GTF2H2, GTF2H3, GTF2H4, GTF2H5, GTF2A1, GTF2A2, GTF2B and TBP; this large multi-subunit PIC complex mediates DNA unwinding and targets Pol II core to the transcription start site where the first phosphodiester bond forms. Pol III complex consists of a ten-subunit catalytic core composed of POLR3A/RPC1, POLR3B/RPC2, POLR1C/RPAC1, POLR1D/RPAC2, POLR3K/RPC10, POLR2E/RPABC1, POLR2F/RPABC2, POLR2H/RPABC3, POLR2K/RPABC4 and POLR2L/RPABC5; a mobile stalk composed of two subunits POLR3H/RPC8 and CRCP/RPC9, protruding from the core and functioning primarily in transcription initiation; and additional subunits homologous to general transcription factors of the RNA polymerase II machinery, POLR3C/RPC3-POLR3F/RPC6-POLR3G/RPC7 heterotrimer required for transcription initiation and POLR3D/RPC4-POLR3E/RPC5 heterodimer involved in both transcription initiation and termination.

The protein localises to the nucleus. It is found in the nucleolus. Functionally, DNA-dependent RNA polymerase catalyzes the transcription of DNA into RNA using the four ribonucleoside triphosphates as substrates. Common component of RNA polymerases I, II and III which synthesize ribosomal RNA precursors, mRNA precursors and many functional non-coding RNAs, and a small RNAs, such as 5S rRNA and tRNAs, respectively. The sequence is that of DNA-directed RNA polymerases I, II, and III subunit RPABC4 (Polr2k) from Mus musculus (Mouse).